The chain runs to 113 residues: Beta-defensin 112 (113 aa).

Intrachain disulfides connect C54-C82, C61-C75, and C65-C83.

The protein belongs to the beta-defensin family.

It localises to the secreted. Its function is as follows. Has antibacterial activity. In Pan troglodytes (Chimpanzee), this protein is Beta-defensin 112 (DEFB112).